Here is a 505-residue protein sequence, read N- to C-terminus: Forkhead box protein O4 (505 aa).

3 disordered regions span residues 1–66 (MDPE…HSEP), 175–244 (SSWW…SPCP), and 257–276 (RPRS…PMRP). Phosphothreonine; by PKB/AKT1 is present on threonine 32. A required for interaction with FOXK1 region spans residues 97-215 (RRNAWGNQSY…RGRSKGPKKK (119 aa)). A DNA-binding region (fork-head) is located at residues 100-188 (AWGNQSYAEL…MLNPDGGKGG (89 aa)). At serine 197 the chain carries Phosphoserine; by PKB/AKT1. The segment covering 205-216 (LRGRSKGPKKKP) has biased composition (basic residues). Positions 257–271 (RPRSSSNASTVSTRL) are enriched in polar residues. A Phosphoserine; by PKB/AKT1 modification is found at serine 262.

As to quaternary structure, interacts with CREBBP/CBP, MYOCD, SIRT1, SRF and YWHAZ. Acetylated by CREBBP/CBP and deacetylated by SIRT1. Binding of YWHAZ inhibits DNA-binding. Interacts with USP7; the interaction is enhanced in presence of hydrogen peroxide and occurs independently of TP53. Interacts with NLK, and this inhibits monoubiquitination and transcriptional activity. Interacts with FOXK1; the interaction inhibits MEF2C transactivation activity. Post-translationally, acetylation by CREBBP/CBP is induced by oxidative stress and inhibits transcriptional activity. Deacetylation by SIRT1 is NAD-dependent and stimulates transcriptional activity. In terms of processing, phosphorylation by PKB/AKT1 inhibits transcriptional activity and is responsible for cytoplasmic localization. May be phosphorylated at multiple sites by NLK. Monoubiquitinated; monoubiquitination is induced by oxidative stress and reduced by deacetylase inhibitors; results in its relocalization to the nucleus and its increased transcriptional activity. Deubiquitinated by USP7; deubiquitination is induced by oxidative stress; enhances its interaction with USP7 and consequently, deubiquitination; increases its translocation to the cytoplasm and inhibits its transcriptional activity. Hydrogene-peroxide-induced ubiquitination and USP7-mediated deubiquitination have no major effect on its protein stability. In terms of tissue distribution, strongly expressed in brown adipose tissue and weakly in white adipose tissue (at protein level). Expressed in skeletal muscle.

It localises to the cytoplasm. Its subcellular location is the nucleus. In terms of biological role, transcription factor involved in the regulation of the insulin signaling pathway. Binds to insulin-response elements (IREs) and can activate transcription of IGFBP1. Down-regulates expression of HIF1A and suppresses hypoxia-induced transcriptional activation of HIF1A-modulated genes. Also involved in negative regulation of the cell cycle. Involved in increased proteasome activity in embryonic stem cells (ESCs) by activating expression of PSMD11 in ESCs, leading to enhanced assembly of the 26S proteasome, followed by higher proteasome activity. Represses smooth muscle cell differentiation by inhibiting the transcriptional coactivator activity of myocardin. The chain is Forkhead box protein O4 (Foxo4) from Mus musculus (Mouse).